The primary structure comprises 134 residues: Small ribosomal subunit protein bS16 (134 aa).

The segment at 115–134 (AKLRRRQAKKAAEAAGSAEG) is disordered.

Belongs to the bacterial ribosomal protein bS16 family.

The sequence is that of Small ribosomal subunit protein bS16 from Chlorobaculum tepidum (strain ATCC 49652 / DSM 12025 / NBRC 103806 / TLS) (Chlorobium tepidum).